The primary structure comprises 459 residues: ATP synthase subunit beta (459 aa).

148–155 (GGAGVGKT) lines the ATP pocket.

It belongs to the ATPase alpha/beta chains family. In terms of assembly, F-type ATPases have 2 components, CF(1) - the catalytic core - and CF(0) - the membrane proton channel. CF(1) has five subunits: alpha(3), beta(3), gamma(1), delta(1), epsilon(1). CF(0) has three main subunits: a(1), b(2) and c(9-12). The alpha and beta chains form an alternating ring which encloses part of the gamma chain. CF(1) is attached to CF(0) by a central stalk formed by the gamma and epsilon chains, while a peripheral stalk is formed by the delta and b chains.

It localises to the cell inner membrane. It catalyses the reaction ATP + H2O + 4 H(+)(in) = ADP + phosphate + 5 H(+)(out). Functionally, produces ATP from ADP in the presence of a proton gradient across the membrane. The catalytic sites are hosted primarily by the beta subunits. This Thioalkalivibrio sulfidiphilus (strain HL-EbGR7) protein is ATP synthase subunit beta.